Reading from the N-terminus, the 303-residue chain is Proline dehydrogenase 2 (303 aa).

A substrate-binding site is contributed by K96. Residue D130 is part of the active site. 2 residues coordinate FAD: M131 and Q159. R180 is an active-site residue. Residues 183 to 185 (KGA) and 222 to 223 (TH) contribute to the FAD site. 284–285 (RR) is a substrate binding site.

The protein belongs to the proline dehydrogenase family. FAD is required as a cofactor.

The catalysed reaction is L-proline + a quinone = (S)-1-pyrroline-5-carboxylate + a quinol + H(+). It functions in the pathway amino-acid degradation; L-proline degradation into L-glutamate; L-glutamate from L-proline: step 1/2. In terms of biological role, converts proline to delta-1-pyrroline-5-carboxylate. Important for the use of proline as a sole carbon and energy source or a sole nitrogen source. In Bacillus subtilis (strain 168), this protein is Proline dehydrogenase 2.